A 351-amino-acid polypeptide reads, in one-letter code: MLINGVIIMEMDKRKIKILQAIIHDYIQTAEPVGSRTIAKKYDLGVSSATIRNEMSDLEDMGYLEQLHSSSGRKPSDKGYRLYVDKLMNIQKLSSMEECAIKTHIINSALYEIEKVVREASAILADLTKLTTVVMSPSSIESYIKSIQLIGLDANTVLLVLVIDTGIIKNNVIKLHAKMTIDELVKINRILNIKLNKIRVESINLDFLKVVLEEFKDYEKWLKDILPVLYETLLSGIDSNEIYLEGATNIFNYPEYNDIQRAKDFLSLIDDKDKVKNLIKSDDNITIKIGKENFIEDAKDCTIITAVYKLKDRPLGTIGVIGPTRMPYSRVVSILSTLVDELDKLLKDDNI.

It belongs to the HrcA family.

Functionally, negative regulator of class I heat shock genes (grpE-dnaK-dnaJ and groELS operons). Prevents heat-shock induction of these operons. The polypeptide is Heat-inducible transcription repressor HrcA (Clostridium tetani (strain Massachusetts / E88)).